Consider the following 74-residue polypeptide: ATP synthase subunit c (74 aa).

The next 2 helical transmembrane spans lie at 8-28 (FIGIGFMAIGMYGAALGVSNI) and 52-72 (IGAGLAEAMGLFSFVIAMLLI).

The protein belongs to the ATPase C chain family. As to quaternary structure, F-type ATPases have 2 components, F(1) - the catalytic core - and F(0) - the membrane proton channel. F(1) has five subunits: alpha(3), beta(3), gamma(1), delta(1), epsilon(1). F(0) has three main subunits: a(1), b(2) and c(10-14). The alpha and beta chains form an alternating ring which encloses part of the gamma chain. F(1) is attached to F(0) by a central stalk formed by the gamma and epsilon chains, while a peripheral stalk is formed by the delta and b chains.

The protein resides in the cell inner membrane. Functionally, f(1)F(0) ATP synthase produces ATP from ADP in the presence of a proton or sodium gradient. F-type ATPases consist of two structural domains, F(1) containing the extramembraneous catalytic core and F(0) containing the membrane proton channel, linked together by a central stalk and a peripheral stalk. During catalysis, ATP synthesis in the catalytic domain of F(1) is coupled via a rotary mechanism of the central stalk subunits to proton translocation. Its function is as follows. Key component of the F(0) channel; it plays a direct role in translocation across the membrane. A homomeric c-ring of between 10-14 subunits forms the central stalk rotor element with the F(1) delta and epsilon subunits. This Rickettsia prowazekii (strain Madrid E) protein is ATP synthase subunit c.